The sequence spans 444 residues: Na(+)/H(+) antiporter NhaA (444 aa).

The next 11 helical transmembrane spans lie at 27 to 47 (TTGL…NSPL), 72 to 92 (IHHW…GLEI), 108 to 128 (MLPI…YYAI), 136 to 156 (AGWG…LVLL), 167 to 187 (FLVA…ALFY), 190 to 210 (EINM…VSFN), 212 to 232 (FGIH…LFML), 312 to 332 (HLPV…GVSI), 349 to 369 (VMAG…YLAI), 385 to 405 (VFGV…IAEL), and 419 to 439 (IGIL…LRFI).

It belongs to the NhaA Na(+)/H(+) (TC 2.A.33) antiporter family.

It is found in the cell inner membrane. The catalysed reaction is Na(+)(in) + 2 H(+)(out) = Na(+)(out) + 2 H(+)(in). Na(+)/H(+) antiporter that extrudes sodium in exchange for external protons. This is Na(+)/H(+) antiporter NhaA from Sulfurimonas denitrificans (strain ATCC 33889 / DSM 1251) (Thiomicrospira denitrificans (strain ATCC 33889 / DSM 1251)).